The chain runs to 524 residues: Metal transporter Nramp2 (524 aa).

The disordered stretch occupies residues 34–58 (AYDSDDKVSIAVSDSDSEDGGGGGG). Helical transmembrane passes span 70–90 (LWRF…PGNL), 98–118 (AAAG…GALV), 155–175 (LALV…IKIL), 179–199 (TVPL…FLFL), 207–227 (LEAF…IMFG), 253–273 (AVGI…SALV), 295–315 (IESI…TTVF), 341–361 (YGTA…ASGQ), 389–409 (AMIT…FFDT), 420–440 (ALNV…ITLV), 457–477 (VISW…ILSF), and 486–506 (LVRS…VYLI).

The protein belongs to the NRAMP (TC 2.A.55) family.

The protein localises to the membrane. Probable metal transporter. This Oryza sativa subsp. japonica (Rice) protein is Metal transporter Nramp2 (NRAMP2).